A 137-amino-acid chain; its full sequence is Ribonuclease VapC27 (137 aa).

The region spanning 7–125 (VDTSVAIPLL…ATRDARAKDT (119 aa)) is the PINc domain. 2 residues coordinate Mg(2+): Asp-8 and Asp-101.

It belongs to the PINc/VapC protein family. Interacts with cognate antitoxin VapB27. The cofactor is Mg(2+).

The protein resides in the secreted. Its function is as follows. Probably the toxic component of a type II toxin-antitoxin (TA) system. An RNase. Its cognate antitoxin is VapB27. The polypeptide is Ribonuclease VapC27 (Mycobacterium tuberculosis (strain ATCC 25618 / H37Rv)).